Reading from the N-terminus, the 1434-residue chain is Probable ATP-dependent RNA helicase spindle-E (1434 aa).

Residues 125–292 (LAAINAHPVV…FTTTNSIPPV (168 aa)) enclose the Helicase ATP-binding domain. 138–145 (GETGCGKT) is an ATP binding site. The DEAH box signature appears at 238 to 241 (DEVH). The Helicase C-terminal domain maps to 354-526 (QSRQSYDEAL…NSVLKAKVLN (173 aa)). Positions 938 to 1001 (ASAIAKGMMV…RLMPRELTEQ (64 aa)) constitute a Tudor domain.

This sequence belongs to the DEAD box helicase family. DEAH subfamily.

It localises to the cytoplasm. It is found in the perinuclear region. The protein localises to the cytoplasmic ribonucleoprotein granule. The catalysed reaction is ATP + H2O = ADP + phosphate + H(+). Its function is as follows. Probable ATP-binding RNA helicase which plays a central role during spermatogenesis and oogenesis by repressing transposable elements and preventing their mobilization, which is essential for the germline integrity. Acts via the piRNA metabolic process, which mediates the repression of transposable elements during meiosis by forming complexes composed of piRNAs and Piwi and govern the methylation and subsequent repression of transposons. Involved in the repression of LTR retrotransposon copia. Also involved in telomere regulation by repressing specialized telomeric retroelements HeT-A, TAHRE, and TART; Drosophila telomeres being maintained by transposition of specialized telomeric retroelements. Involved in telomeric trans-silencing, a repression mechanism by which a transposon or a transgene inserted in subtelomeric heterochromatin has the capacity to repress in trans in the female germline, a homologous transposon, or transgene located in euchromatin. Involved in the repression of testis-expressed Stellate genes by the homologous Su(Ste) repeats. Required for anteroposterior and dorsoventral axis formation during oogenesis. Key component of the perinuclear meiotic nuage, an electron dense structure involved in the post-transcriptional regulation of transposons and mRNAs; required for recruitment of other nuage comonents including vas, krimp, aub and mael. May have a role in production of piwi-interacting RNA (piRNA). The chain is Probable ATP-dependent RNA helicase spindle-E from Drosophila melanogaster (Fruit fly).